We begin with the raw amino-acid sequence, 582 residues long: SUMO-activating enzyme subunit uba-2 (582 aa).

ATP is bound by residues 20–25 (GAGGIG), aspartate 44, 52–55 (NLNR), lysine 68, 91–92 (SI), and 113–118 (DNRAAR). Residues cysteine 154 and cysteine 157 each contribute to the Zn(2+) site. Residue cysteine 170 is the Glycyl thioester intermediate of the active site. The span at 204 to 214 (SPDMDAVDPDN) shows a compositional bias: acidic residues. The interval 204-235 (SPDMDAVDPDNTEAVTTEKEKEAMKEEPAPVG) is disordered. Positions 219-231 (TTEKEKEAMKEEP) are enriched in basic and acidic residues. The Zn(2+) site is built by cysteine 431 and cysteine 434. Residues 531–570 (FEVARSEKEPEPDDRKRKADGSEEPEAKRQKVEEKDDKNG) show a composition bias toward basic and acidic residues. The interval 531-582 (FEVARSEKEPEPDDRKRKADGSEEPEAKRQKVEEKDDKNGNEAVAEITETMA) is disordered.

It belongs to the ubiquitin-activating E1 family. As to quaternary structure, heterodimer with aos-1.

The protein operates within protein modification; protein sumoylation. Functionally, the dimeric enzyme acts as an E1 ligase for smo-1. It mediates ATP-dependent activation of smo-1 and formation of a thioester with a conserved cysteine residue on uba-2. The chain is SUMO-activating enzyme subunit uba-2 (uba-2) from Caenorhabditis elegans.